The sequence spans 310 residues: N-acetylmuramic acid 6-phosphate etherase (310 aa).

One can recognise an SIS domain in the interval Ile-64 to Lys-227. Glu-92 acts as the Proton donor in catalysis. The active site involves Glu-123.

Belongs to the GCKR-like family. MurNAc-6-P etherase subfamily. In terms of assembly, homodimer.

The catalysed reaction is N-acetyl-D-muramate 6-phosphate + H2O = N-acetyl-D-glucosamine 6-phosphate + (R)-lactate. Its pathway is amino-sugar metabolism; N-acetylmuramate degradation. Specifically catalyzes the cleavage of the D-lactyl ether substituent of MurNAc 6-phosphate, producing GlcNAc 6-phosphate and D-lactate. The polypeptide is N-acetylmuramic acid 6-phosphate etherase (Prochlorococcus marinus (strain NATL1A)).